The primary structure comprises 693 residues: Elongation factor G (693 aa).

The tr-type G domain maps to 8–282; it reads EKTRNIGIMA…AVVDYLPSPL (275 aa). GTP is bound by residues 17–24, 81–85, and 135–138; these read AHVDAGKT, DTPGH, and NKMD.

Belongs to the TRAFAC class translation factor GTPase superfamily. Classic translation factor GTPase family. EF-G/EF-2 subfamily.

Its subcellular location is the cytoplasm. Functionally, catalyzes the GTP-dependent ribosomal translocation step during translation elongation. During this step, the ribosome changes from the pre-translocational (PRE) to the post-translocational (POST) state as the newly formed A-site-bound peptidyl-tRNA and P-site-bound deacylated tRNA move to the P and E sites, respectively. Catalyzes the coordinated movement of the two tRNA molecules, the mRNA and conformational changes in the ribosome. This chain is Elongation factor G, found in Streptococcus mutans serotype c (strain ATCC 700610 / UA159).